The sequence spans 299 residues: Plasmodesmata-located protein 5 (299 aa).

Residues 1–25 (MIKTKTTSLLCFLLTAVILMNPSSS) form the signal peptide. The Extracellular portion of the chain corresponds to 26–264 (SPTDNYIYAV…NKDDNGVGKT (239 aa)). Gnk2-homologous domains are found at residues 29–135 (DNYI…NKSF) and 137–237 (GVQD…VGGS). Cystine bridges form between cysteine 36–cysteine 113, cysteine 89–cysteine 98, cysteine 101–cysteine 126, cysteine 148–cysteine 215, cysteine 191–cysteine 200, and cysteine 203–cysteine 228. The helical transmembrane segment at 265-285 (LAIIIGIVTLIILLVVFLAFV) threads the bilayer. Residues 265 to 285 (LAIIIGIVTLIILLVVFLAFV) form a necessary and sufficient for plasmodesmal targeting region. At 286–299 (GKCCRKLQDEKWCK) the chain is on the cytoplasmic side.

Belongs to the cysteine-rich repeat secretory protein family. Plasmodesmata-located proteins (PDLD) subfamily. As to quaternary structure, monomer. Interacts with PDLP1. (Microbial infection) Interacts with Grapevine fanleaf virus (GFLV) 2B-MP. As to expression, highly expressed in inflorescence nodes and rosette senescent leaves. Mostly expressed in cell wall junctions between leaf epidermal and mesophyl cells, and to a lesser extent at the cross walls between epidermal or cortex cells within the hypocotyl (at protein level). Low vascular expression in seedling and mature leaf, but high expression in senescing leaves (at protein level).

It localises to the cell membrane. The protein resides in the cell junction. Its subcellular location is the plasmodesma. Its function is as follows. Modulates cell-to-cell trafficking. Has a positive role in innate immunity. Required for systemic acquired resistance (SAR) which is mediated by the signaling molecules azelaic acid (AzA), glycerol-3-phosphate (G3P), and salicylic acid (SA). Negative regulator of plasmodesmata permeability triggered by SA during immune responses, through regulation of callose deposition. Delays the trafficking of Tobacco Mosaic Virus (TMV) movement protein (MP). Required for symplastic signal transport. The sequence is that of Plasmodesmata-located protein 5 from Arabidopsis thaliana (Mouse-ear cress).